Consider the following 131-residue polypeptide: Profilin-7 (131 aa).

Cys-13 and Cys-115 are joined by a disulfide. The short motif at 81–97 (AVIRGKKGAGGITIKKT) is the Involved in PIP2 interaction element. Thr-111 bears the Phosphothreonine mark.

Belongs to the profilin family. In terms of assembly, occurs in many kinds of cells as a complex with monomeric actin in a 1:1 ratio. In terms of processing, phosphorylated by MAP kinases.

The protein resides in the cytoplasm. It is found in the cytoskeleton. Functionally, binds to actin and affects the structure of the cytoskeleton. At high concentrations, profilin prevents the polymerization of actin, whereas it enhances it at low concentrations. The polypeptide is Profilin-7 (Olea europaea (Common olive)).